Reading from the N-terminus, the 943-residue chain is Centromere protein C (943 aa).

A Glycyl lysine isopeptide (Lys-Gly) (interchain with G-Cter in SUMO2) cross-link involves residue Lys45. The interval Cys70–Lys91 is disordered. Phosphoserine is present on residues Ser73 and Ser96. Lys119 participates in a covalent cross-link: Glycyl lysine isopeptide (Lys-Gly) (interchain with G-Cter in SUMO2). Phosphothreonine is present on Thr130. Residue Lys134 forms a Glycyl lysine isopeptide (Lys-Gly) (interchain with G-Cter in SUMO2) linkage. At Ser146 the chain carries Phosphoserine. Residue Lys180 forms a Glycyl lysine isopeptide (Lys-Gly) (interchain with G-Cter in SUMO2) linkage. At Thr183 the chain carries Phosphothreonine. The residue at position 189 (Ser189) is a Phosphoserine. Residues Lys212 and Lys217 each participate in a glycyl lysine isopeptide (Lys-Gly) (interchain with G-Cter in SUMO2) cross-link. Residues Val224–Pro239 show a composition bias toward basic and acidic residues. The segment at Val224–Ser250 is disordered. Residue Ser225 is modified to Phosphoserine. Residues Lys238 and Lys260 each participate in a glycyl lysine isopeptide (Lys-Gly) (interchain with G-Cter in SUMO2) cross-link. The Nuclear localization signal signature appears at Lys259 to Lys273. The residue at position 261 (Ser261) is a Phosphoserine. Residues Lys271, Lys273, and Lys297 each participate in a glycyl lysine isopeptide (Lys-Gly) (interchain with G-Cter in SUMO2) cross-link. Phosphoserine occurs at positions 316, 333, 376, and 397. A disordered region spans residues Leu358–Asp377. Positions Tyr403–Val513 are disordered. A compositionally biased stretch (basic residues) spans Arg412–Met426. Composition is skewed to basic and acidic residues over residues Gln438–Glu463 and Thr488–Pro510. Position 439 is a phosphoserine (Ser439). A Glycyl lysine isopeptide (Lys-Gly) (interchain with G-Cter in SUMO2) cross-link involves residue Lys440. Positions Lys484–Arg499 match the Nuclear localization signal motif. Ser528 bears the Phosphoserine mark. Lys534 is covalently cross-linked (Glycyl lysine isopeptide (Lys-Gly) (interchain with G-Cter in SUMO2)). Disordered stretches follow at residues Glu537–Gly587 and Asp632–Lys717. A Phosphoserine modification is found at Ser538. A Nuclear localization signal motif is present at residues Arg558 to Lys574. Over residues Asn570–Thr583 the composition is skewed to basic residues. The span at Cys633–Asp672 shows a compositional bias: polar residues. A Glycyl lysine isopeptide (Lys-Gly) (interchain with G-Cter in SUMO2) cross-link involves residue Lys677. Phosphoserine occurs at positions 684, 709, and 710. Over residues Val706–Gln715 the composition is skewed to basic and acidic residues. Lys727 is covalently cross-linked (Glycyl lysine isopeptide (Lys-Gly) (interchain with G-Cter in SUMO2)). The residue at position 734 (Thr734) is a Phosphothreonine. The tract at residues Val737–Gln759 is MIF2 homology domain II. Phosphoserine is present on residues Ser763 and Ser773. The short motif at Lys780–Arg798 is the Nuclear localization signal element. Lys807 is covalently cross-linked (Glycyl lysine isopeptide (Lys-Gly) (interchain with G-Cter in SUMO2)). An MIF2 homology domain III region spans residues Leu890–Arg943.

Belongs to the CENP-C/MIF2 family. Oligomer. Component of the CENPA-NAC complex, at least composed of CENPA, CENPC, CENPH, CENPM, CENPN, CENPT and CENPU. The CENPA-NAC complex interacts with the CENPA-CAD complex, composed of CENPI, CENPK, CENPL, CENPO, CENPP, CENPQ, CENPR and CENPS. Binds to DAXX. Interacts with DNMT3B. Interacts directly with CENPA. Identified in a centromere complex containing histones H2A, H2B and H4, and at least CENPA, CENPB, CENPC, CENPT, CENPN, HJURP, SUPT16H, SSRP1 and RSF1. Interacts with MEIKIN.

Its subcellular location is the nucleus. The protein localises to the chromosome. It localises to the centromere. The protein resides in the kinetochore. In terms of biological role, component of the CENPA-NAC (nucleosome-associated) complex, a complex that plays a central role in assembly of kinetochore proteins, mitotic progression and chromosome segregation. The CENPA-NAC complex recruits the CENPA-CAD (nucleosome distal) complex and may be involved in incorporation of newly synthesized CENPA into centromeres. CENPC recruits DNA methylation and DNMT3B to both centromeric and pericentromeric satellite repeats and regulates the histone code in these regions. In Homo sapiens (Human), this protein is Centromere protein C (CENPC).